The sequence spans 1229 residues: Receptor-type adenylate cyclase GRESAG 4.3 (1229 aa).

Residues Met-1 to Pro-24 are Cytoplasmic-facing. The helical transmembrane segment at Thr-25–Val-45 threads the bilayer. The Extracellular portion of the chain corresponds to Asp-46–Gln-845. Residues Asn-77, Asn-84, Asn-626, Asn-693, and Asn-768 are each glycosylated (N-linked (GlcNAc...) asparagine). A helical transmembrane segment spans residues Leu-846–Leu-866. Residues Ala-867 to Val-1229 are Cytoplasmic-facing. The region spanning Thr-889–Glu-1043 is the Guanylate cyclase domain. Mg(2+)-binding residues include Asp-894 and Asp-937.

Belongs to the adenylyl cyclase class-3 family. The cofactor is Mg(2+).

The protein localises to the membrane. The enzyme catalyses ATP = 3',5'-cyclic AMP + diphosphate. In terms of biological role, could act as a receptor for an unknown ligand. This is Receptor-type adenylate cyclase GRESAG 4.3 (GRESAG 4.3) from Trypanosoma brucei brucei.